We begin with the raw amino-acid sequence, 89 residues long: uncharacterized protein (89 aa).

Met1 is a topological domain (cytoplasmic). A helical membrane pass occupies residues Leu2–Leu22. The Extracellular segment spans residues Met23 to Gly89.

The protein localises to the host membrane. This is an uncharacterized protein from Sulfolobus islandicus filamentous virus (isolate Iceland/Hveragerdi) (SIFV).